Consider the following 455-residue polypeptide: MSFIPHKLEQIKKMLDTIGASSVDQLFDEIPRHLRADTLNIKDGINEIQLANLMRKRANKNHHNINYIGAGAYSHHIPAAIWDIVARGEFYTAYTPYQAEASQGGLQVIYEFQTMMAGLTGMDASNASMYDGATALAESVLMAIRSNKKAKSQKVLIAEALHPTYLRVLETITKHQGIEFDIVNLDSKNGKTDVTKLEDFANTNYAAVVIQSPNFLGQLADVDGITNWAHKHGALVIAVTNPMSLAILKSPAEWGDNGADIVCGEGQPIGVPLASGGPYFGFMTCKMAHVRQMPGRIVGKTVDLDGNEGFCLTLQAREQHIRRAKATSNICTNQGLMVTAATIYMSLLGAEGLERVASISHENTQTLATELAKINGVSIRFNSAFFNEVVIDLPVNAETFVTEMEKEAIDAGYFLGEYHSDLANSIMVCATEIHTSEDIKEYIEATKKVLARIGG.

The protein belongs to the GcvP family. N-terminal subunit subfamily. The glycine cleavage system is composed of four proteins: P, T, L and H. In this organism, the P 'protein' is a heterodimer of two subunits.

The catalysed reaction is N(6)-[(R)-lipoyl]-L-lysyl-[glycine-cleavage complex H protein] + glycine + H(+) = N(6)-[(R)-S(8)-aminomethyldihydrolipoyl]-L-lysyl-[glycine-cleavage complex H protein] + CO2. Functionally, the glycine cleavage system catalyzes the degradation of glycine. The P protein binds the alpha-amino group of glycine through its pyridoxal phosphate cofactor; CO(2) is released and the remaining methylamine moiety is then transferred to the lipoamide cofactor of the H protein. In Francisella tularensis subsp. holarctica (strain FTNF002-00 / FTA), this protein is Probable glycine dehydrogenase (decarboxylating) subunit 1.